A 297-amino-acid chain; its full sequence is Acetyl-coenzyme A carboxylase carboxyl transferase subunit beta (297 aa).

Residues 1 to 23 form a disordered region; that stretch reads MSWIERILGRTSSSSSSSKSKVP. The 270-residue stretch at 26–295 folds into the CoA carboxyltransferase N-terminal domain; that stretch reads VWTKCTSCEQ…PFKTAELIVE (270 aa). Zn(2+) contacts are provided by cysteine 30, cysteine 33, cysteine 49, and cysteine 52. The segment at 30-52 adopts a C4-type zinc-finger fold; that stretch reads CTSCEQVLYSEELKRNMHVCPKC.

It belongs to the AccD/PCCB family. In terms of assembly, acetyl-CoA carboxylase is a heterohexamer composed of biotin carboxyl carrier protein (AccB), biotin carboxylase (AccC) and two subunits each of ACCase subunit alpha (AccA) and ACCase subunit beta (AccD). The cofactor is Zn(2+).

The protein resides in the cytoplasm. The enzyme catalyses N(6)-carboxybiotinyl-L-lysyl-[protein] + acetyl-CoA = N(6)-biotinyl-L-lysyl-[protein] + malonyl-CoA. The protein operates within lipid metabolism; malonyl-CoA biosynthesis; malonyl-CoA from acetyl-CoA: step 1/1. Functionally, component of the acetyl coenzyme A carboxylase (ACC) complex. Biotin carboxylase (BC) catalyzes the carboxylation of biotin on its carrier protein (BCCP) and then the CO(2) group is transferred by the transcarboxylase to acetyl-CoA to form malonyl-CoA. This is Acetyl-coenzyme A carboxylase carboxyl transferase subunit beta from Actinobacillus pleuropneumoniae serotype 5b (strain L20).